Here is a 758-residue protein sequence, read N- to C-terminus: Probable adenosylcobalamin-dependent ribonucleoside-triphosphate reductase (758 aa).

C194 and C459 are joined by a disulfide. A disordered region spans residues 233–256; it reads IIIKGQLPPPPPQQQPQQQQQQHG. Active-site residues include C448 and E450.

Belongs to the class II ribonucleoside-triphosphate reductase family. In terms of assembly, monomer. It depends on adenosylcob(III)alamin as a cofactor.

It catalyses the reaction a 2'-deoxyribonucleoside 5'-triphosphate + [thioredoxin]-disulfide + H2O = a ribonucleoside 5'-triphosphate + [thioredoxin]-dithiol. The protein is Probable adenosylcobalamin-dependent ribonucleoside-triphosphate reductase (rtpR) of Dictyostelium discoideum (Social amoeba).